We begin with the raw amino-acid sequence, 348 residues long: Spermidine/putrescine import ATP-binding protein PotA (348 aa).

The ABC transporter domain maps to 6-236 (IRLVNVTKEY…PKNVFVADFI (231 aa)). ATP is bound at residue 38 to 45 (GPSGCGKT).

Belongs to the ABC transporter superfamily. Spermidine/putrescine importer (TC 3.A.1.11.1) family. The complex is composed of two ATP-binding proteins (PotA), two transmembrane proteins (PotB and PotC) and a solute-binding protein (PotD).

It is found in the cell membrane. The enzyme catalyses ATP + H2O + polyamine-[polyamine-binding protein]Side 1 = ADP + phosphate + polyamineSide 2 + [polyamine-binding protein]Side 1.. In terms of biological role, part of the ABC transporter complex PotABCD involved in spermidine/putrescine import. Responsible for energy coupling to the transport system. In Desulfitobacterium hafniense (strain Y51), this protein is Spermidine/putrescine import ATP-binding protein PotA.